Reading from the N-terminus, the 159-residue chain is Ribosomal RNA large subunit methyltransferase H (159 aa).

Residues Leu76, Gly108, and 127–132 contribute to the S-adenosyl-L-methionine site; that span reads FSKMTF.

It belongs to the RNA methyltransferase RlmH family. As to quaternary structure, homodimer.

The protein localises to the cytoplasm. The catalysed reaction is pseudouridine(1915) in 23S rRNA + S-adenosyl-L-methionine = N(3)-methylpseudouridine(1915) in 23S rRNA + S-adenosyl-L-homocysteine + H(+). In terms of biological role, specifically methylates the pseudouridine at position 1915 (m3Psi1915) in 23S rRNA. The polypeptide is Ribosomal RNA large subunit methyltransferase H (Clostridium botulinum (strain Okra / Type B1)).